Reading from the N-terminus, the 138-residue chain is Translation initiation factor 5A (138 aa).

Hypusine is present on lysine 42.

The protein belongs to the eIF-5A family.

It is found in the cytoplasm. Its function is as follows. Functions by promoting the formation of the first peptide bond. In Pyrobaculum aerophilum (strain ATCC 51768 / DSM 7523 / JCM 9630 / CIP 104966 / NBRC 100827 / IM2), this protein is Translation initiation factor 5A (eif5a).